The chain runs to 89 residues: Small ribosomal subunit protein bS18 (89 aa).

The protein belongs to the bacterial ribosomal protein bS18 family. In terms of assembly, part of the 30S ribosomal subunit. Forms a tight heterodimer with protein bS6.

In terms of biological role, binds as a heterodimer with protein bS6 to the central domain of the 16S rRNA, where it helps stabilize the platform of the 30S subunit. The polypeptide is Small ribosomal subunit protein bS18 (Parabacteroides distasonis (strain ATCC 8503 / DSM 20701 / CIP 104284 / JCM 5825 / NCTC 11152)).